A 122-amino-acid chain; its full sequence is uncharacterized protein (122 aa).

Residues 10-120 (VFARILRGEI…AGRRLGPMIT (111 aa)) form the HIT domain. The Histidine triad motif motif lies at 104–108 (HLHIH).

This is an uncharacterized protein from Azospirillum brasilense.